A 183-amino-acid polypeptide reads, in one-letter code: Dual-action ribosomal maturation protein DarP (183 aa).

The protein belongs to the DarP family.

The protein localises to the cytoplasm. Member of a network of 50S ribosomal subunit biogenesis factors which assembles along the 30S-50S interface, preventing incorrect 23S rRNA structures from forming. Promotes peptidyl transferase center (PTC) maturation. This Salmonella arizonae (strain ATCC BAA-731 / CDC346-86 / RSK2980) protein is Dual-action ribosomal maturation protein DarP.